The primary structure comprises 403 residues: D-galactonate dehydratase family member RspA (403 aa).

Substrate-binding residues include Asn37 and His122. The Proton donor/acceptor role is filled by Tyr159. Position 211 (Asp211) interacts with Mg(2+). His213 serves as the catalytic Proton donor/acceptor. Mg(2+) is bound by residues Glu237 and Glu263. Residues Glu263, Arg284, His313, Asp317, and Glu340 each coordinate substrate.

The protein belongs to the mandelate racemase/muconate lactonizing enzyme family. GalD subfamily. Mg(2+) serves as cofactor.

The catalysed reaction is D-mannonate = 2-dehydro-3-deoxy-D-gluconate + H2O. It catalyses the reaction D-gluconate = 2-dehydro-3-deoxy-D-gluconate + H2O. Functionally, has low dehydratase activity with D-mannonate and D-gluconate, suggesting that these are not physiological substrates and that it has no significant role in the in vivo degradation of these compounds. Has no detectable activity with a panel of 70 other acid sugars (in vitro). The protein is D-galactonate dehydratase family member RspA (rspA) of Halomonas elongata (strain ATCC 33173 / DSM 2581 / NBRC 15536 / NCIMB 2198 / 1H9).